Consider the following 269-residue polypeptide: Phosphonoacetaldehyde hydrolase (269 aa).

Catalysis depends on D10, which acts as the Nucleophile. D10 and A12 together coordinate Mg(2+). Residue K52 is the Schiff-base intermediate with substrate of the active site. D186 is a Mg(2+) binding site.

Belongs to the HAD-like hydrolase superfamily. PhnX family. As to quaternary structure, homodimer. Requires Mg(2+) as cofactor.

The catalysed reaction is phosphonoacetaldehyde + H2O = acetaldehyde + phosphate + H(+). In terms of biological role, involved in phosphonate degradation. In Salmonella paratyphi A (strain ATCC 9150 / SARB42), this protein is Phosphonoacetaldehyde hydrolase.